A 194-amino-acid polypeptide reads, in one-letter code: H-N-H endonuclease F-TflI (194 aa).

In terms of biological role, endonuclease that cleaves only one strand of asymmetric DNA substrates thereby introducing interruptions into the template or coding strand. This Escherichia coli (Enterobacteria phage T5) protein is H-N-H endonuclease F-TflI.